The sequence spans 141 residues: Putative nickel-responsive regulator (141 aa).

4 residues coordinate Ni(2+): histidine 80, histidine 91, histidine 93, and cysteine 99.

It belongs to the transcriptional regulatory CopG/NikR family. Ni(2+) serves as cofactor.

Its function is as follows. Transcriptional regulator. The sequence is that of Putative nickel-responsive regulator from Methanococcus aeolicus (strain ATCC BAA-1280 / DSM 17508 / OCM 812 / Nankai-3).